A 445-amino-acid polypeptide reads, in one-letter code: UPF0210 protein SPG_0223 (445 aa).

This sequence belongs to the UPF0210 family. In terms of assembly, homodimer.

This is UPF0210 protein SPG_0223 from Streptococcus pneumoniae serotype 19F (strain G54).